Consider the following 300-residue polypeptide: Geranyl diphosphate 2-C-methyltransferase (300 aa).

The disordered stretch occupies residues 1–24 (MAAASAPVPGPGGASSTARGRIPA).

Belongs to the geranyl diphosphate 2-C-methyltransferase family. Mg(2+) serves as cofactor.

It catalyses the reaction (2E)-geranyl diphosphate + S-adenosyl-L-methionine = (E)-2-methylgeranyl diphosphate + S-adenosyl-L-homocysteine + H(+). In terms of biological role, catalyzes the SAM-dependent methylation of geranyl diphosphate (GPP) to yield (E)-2-methylgeranyl diphosphate (2-MeGPP). The sequence is that of Geranyl diphosphate 2-C-methyltransferase (gdpmt) from Streptomyces lasalocidi (Streptomyces lasaliensis).